Reading from the N-terminus, the 123-residue chain is Snaclec echicetin subunit beta (123 aa).

A C-type lectin domain is found at 1–121 (NCLPDWSVYE…SGEFYFVCKC (121 aa)). Intrachain disulfides connect C2-C13, C30-C119, and C96-C111.

This sequence belongs to the snaclec family. As to quaternary structure, heterodimer of subunits alpha and beta; disulfide-linked. Forms an active complex with the pentameric immunoglobuline Mkappa (IgMkappa). Expressed by the venom gland.

The protein resides in the secreted. In terms of biological role, echicetin itself inhibits aggregation of washed platelets induced by vWF, thrombin or alboaggregin-A. However, when complexed with the pentameric plasma immunoglobulin Mkappa (IgMkappa), echicetin binds specifically to GPIb and activates platelets. This is caused by P-selectin expression and activation of alpha-IIb/beta-3 as well as tyrosine phosphorylation of several signal transduction molecules, including p53/56(LYN), p64, p72(SYK), p70 to p90, and p120. In vivo, it induces thrombocytopenia when injected into mice, probably accounting of activation of platelets rather than inhibition. This Echis carinatus sochureki (Saw-scaled viper) protein is Snaclec echicetin subunit beta.